The primary structure comprises 740 residues: Ethylene receptor 1 (740 aa).

Transmembrane regions (helical) follow at residues 23–43 (ISDFFIAVAYFSIPLELIYFV), 53–73 (WVLVQFGAFIVLCGATHLINL), and 95–115 (AAVSCVTALMLVHIIPDLLSV). Cu cation is bound by residues Cys-65 and His-69. The GAF domain maps to 158–307 (DRHTILKTTL…VVADQVAVAL (150 aa)). One can recognise a Histidine kinase domain in the interval 350 to 587 (VMNHEMRTPM…TVTFVVKLGI (238 aa)). Phosphohistidine; by autocatalysis is present on His-353. One can recognise a Response regulatory domain in the interval 615-732 (KVLLMDENGI…KMRNVLSKLL (118 aa)). At Asp-663 the chain carries 4-aspartylphosphate.

The protein belongs to the ethylene receptor family. Homodimer; disulfide-linked. It depends on Cu cation as a cofactor. Post-translationally, activation probably requires a transfer of a phosphate group between a His in the transmitter domain and an Asp of the receiver domain.

It localises to the endoplasmic reticulum membrane. The catalysed reaction is ATP + protein L-histidine = ADP + protein N-phospho-L-histidine.. Functionally, may act early in the ethylene signal transduction pathway, possibly as an ethylene receptor, or as a regulator of the pathway. The sequence is that of Ethylene receptor 1 (ETR1) from Pelargonium hortorum (Common geranium).